The sequence spans 175 residues: Large ribosomal subunit protein uL10 (175 aa).

The protein belongs to the universal ribosomal protein uL10 family. As to quaternary structure, part of the ribosomal stalk of the 50S ribosomal subunit. The N-terminus interacts with L11 and the large rRNA to form the base of the stalk. The C-terminus forms an elongated spine to which L12 dimers bind in a sequential fashion forming a multimeric L10(L12)X complex.

Functionally, forms part of the ribosomal stalk, playing a central role in the interaction of the ribosome with GTP-bound translation factors. This Prochlorococcus marinus (strain AS9601) protein is Large ribosomal subunit protein uL10.